The primary structure comprises 201 residues: NAD(P)H dehydrogenase (quinone) (201 aa).

The region spanning 4-192 is the Flavodoxin-like domain; the sequence is VLVLYYSSYG…TIARFQGQHI (189 aa). Residues 10 to 15 and 80 to 82 contribute to the FMN site; these read SSYGHV and TRF. Position 12 (tyrosine 12) interacts with NAD(+). A substrate-binding site is contributed by tryptophan 100. Residues 115-121 and histidine 136 each bind FMN; that span reads STASQHG.

It belongs to the WrbA family. Requires FMN as cofactor.

It carries out the reaction a quinone + NADH + H(+) = a quinol + NAD(+). The catalysed reaction is a quinone + NADPH + H(+) = a quinol + NADP(+). This is NAD(P)H dehydrogenase (quinone) from Chromohalobacter salexigens (strain ATCC BAA-138 / DSM 3043 / CIP 106854 / NCIMB 13768 / 1H11).